Here is a 70-residue protein sequence, read N- to C-terminus: DNA-directed RNA polymerase subunit omega (70 aa).

Belongs to the RNA polymerase subunit omega family. As to quaternary structure, the RNAP catalytic core consists of 2 alpha, 1 beta, 1 beta' and 1 omega subunit. When a sigma factor is associated with the core the holoenzyme is formed, which can initiate transcription.

The enzyme catalyses RNA(n) + a ribonucleoside 5'-triphosphate = RNA(n+1) + diphosphate. Promotes RNA polymerase assembly. Latches the N- and C-terminal regions of the beta' subunit thereby facilitating its interaction with the beta and alpha subunits. In Caldanaerobacter subterraneus subsp. tengcongensis (strain DSM 15242 / JCM 11007 / NBRC 100824 / MB4) (Thermoanaerobacter tengcongensis), this protein is DNA-directed RNA polymerase subunit omega.